We begin with the raw amino-acid sequence, 184 residues long: Dual specificity protein phosphatase 22 (184 aa).

Gly-2 is lipidated: N-myristoyl glycine. The Tyrosine-protein phosphatase domain occupies 4-144; that stretch reads GMSQILPGLY…LQEFEKHEVH (141 aa). The active-site Phosphocysteine intermediate is Cys-88. A protein-binding residues include Leu-89, Ala-90, Val-92, Ser-93, and Arg-94.

Belongs to the protein-tyrosine phosphatase family. Non-receptor class dual specificity subfamily. As to quaternary structure, monomer. Interacts with LCK; the interaction is direct. Interacts with UBR2; the interaction is direct. Post-translationally, myristoylation regulates subcellular location, and is necessary for activation of JNK.

The protein resides in the cytoplasm. It carries out the reaction O-phospho-L-tyrosyl-[protein] + H2O = L-tyrosyl-[protein] + phosphate. The enzyme catalyses O-phospho-L-seryl-[protein] + H2O = L-seryl-[protein] + phosphate. The catalysed reaction is O-phospho-L-threonyl-[protein] + H2O = L-threonyl-[protein] + phosphate. In terms of biological role, dual specificity phosphatase; can dephosphorylate both phosphotyrosine and phosphoserine or phosphothreonine residues. Activates the JNK signaling pathway. Inhibits T-cell receptor signaling and T-cell mediated immune responses, acting, at least in part, by inducing degradation of E3 ubiquitin ligase UBR2. Dephosphorylates and thereby induces 'Lys-48'-linked ubiquitination of UBR2, leading to proteasomal degradation of UBR2. Dephosphorylates and thereby inactivates tyrosine kinase LCK. Inhibits UBR2-mediated 'Lys-63'-linked ubiquitination of LCK. May play a role in B-cell receptor (BCR) signaling and B-cell function. In Mus musculus (Mouse), this protein is Dual specificity protein phosphatase 22 (Dusp22).